Reading from the N-terminus, the 98-residue chain is NADH-ubiquinone oxidoreductase chain 4L (98 aa).

3 consecutive transmembrane segments (helical) span residues 1 to 21 (MMPI…GALV), 28 to 48 (STLL…ALLI), and 59 to 79 (APLI…ALLV).

The protein belongs to the complex I subunit 4L family. As to quaternary structure, core subunit of respiratory chain NADH dehydrogenase (Complex I) which is composed of 45 different subunits.

The protein localises to the mitochondrion inner membrane. It carries out the reaction a ubiquinone + NADH + 5 H(+)(in) = a ubiquinol + NAD(+) + 4 H(+)(out). Its function is as follows. Core subunit of the mitochondrial membrane respiratory chain NADH dehydrogenase (Complex I) which catalyzes electron transfer from NADH through the respiratory chain, using ubiquinone as an electron acceptor. Part of the enzyme membrane arm which is embedded in the lipid bilayer and involved in proton translocation. The polypeptide is NADH-ubiquinone oxidoreductase chain 4L (MT-ND4L) (Distoechurus pennatus (Feather-tailed possum)).